The following is a 308-amino-acid chain: Probable manganese-dependent inorganic pyrophosphatase (308 aa).

Mn(2+) contacts are provided by His-9, Asp-13, Asp-15, Asp-75, His-97, and Asp-149.

This sequence belongs to the PPase class C family. Requires Mn(2+) as cofactor.

The protein resides in the cytoplasm. The enzyme catalyses diphosphate + H2O = 2 phosphate + H(+). This is Probable manganese-dependent inorganic pyrophosphatase from Bacillus pumilus (strain SAFR-032).